A 122-amino-acid polypeptide reads, in one-letter code: Large ribosomal subunit protein uL14c (122 aa).

Belongs to the universal ribosomal protein uL14 family. Part of the 50S ribosomal subunit.

It is found in the plastid. Its subcellular location is the chloroplast. Functionally, binds to 23S rRNA. This is Large ribosomal subunit protein uL14c from Nicotiana tomentosiformis (Tobacco).